The chain runs to 394 residues: GTPase Obg (394 aa).

The 159-residue stretch at 5–163 folds into the Obg domain; sequence SNFVDYVKIY…RMVIMQLKML (159 aa). A disordered region spans residues 26-45; it reads HFRREKYIPKGGPDGGDGGR. One can recognise an OBG-type G domain in the interval 164–330; it reads ADVGLVGFPN…LKDTLWKELS (167 aa). GTP is bound by residues 170-177, 195-199, 217-220, 284-287, and 311-313; these read GFPNAGKS, FTTLE, DIPG, TKCD, and SAV. Residues serine 177 and threonine 197 each coordinate Mg(2+).

It belongs to the TRAFAC class OBG-HflX-like GTPase superfamily. OBG GTPase family. Monomer. Requires Mg(2+) as cofactor.

The protein resides in the cytoplasm. Functionally, an essential GTPase which binds GTP, GDP and possibly (p)ppGpp with moderate affinity, with high nucleotide exchange rates and a fairly low GTP hydrolysis rate. Plays a role in control of the cell cycle, stress response, ribosome biogenesis and in those bacteria that undergo differentiation, in morphogenesis control. The protein is GTPase Obg of Porphyromonas gingivalis (strain ATCC 33277 / DSM 20709 / CIP 103683 / JCM 12257 / NCTC 11834 / 2561).